The sequence spans 135 residues: ATP synthase epsilon chain (135 aa).

Positions 84–107 are disordered; it reads SLSEEKQSEEQKQRLERAKKALSS. Basic and acidic residues predominate over residues 86–102; it reads SEEKQSEEQKQRLERAK.

The protein belongs to the ATPase epsilon chain family. As to quaternary structure, F-type ATPases have 2 components, CF(1) - the catalytic core - and CF(0) - the membrane proton channel. CF(1) has five subunits: alpha(3), beta(3), gamma(1), delta(1), epsilon(1). CF(0) has three main subunits: a, b and c.

It localises to the cell membrane. In terms of biological role, produces ATP from ADP in the presence of a proton gradient across the membrane. This chain is ATP synthase epsilon chain, found in Elusimicrobium minutum (strain Pei191).